Here is a 160-residue protein sequence, read N- to C-terminus: MTAPASTQAATLKRFISAWEKWDAQEWISTFSDDFQQVTLPHSLSVPVRTRKEVEIVLPALVATVKSYQLQIHHVIHDPDNNKAVVYAASTGKLPWGDWNLEYAAFLTFTDDGGKVARLEEMLDTAFLQDFGPKFGKYLEENGGPVAVAAGGKQDLRSEA.

Belongs to the avfA family.

It functions in the pathway secondary metabolite biosynthesis. In terms of biological role, monooxygenase; part of the gene cluster that mediates the biosynthesis of the tetrahydroxanthone dimer secalonic acid D. The pathway begins with the synthesis of atrochrysone thioester by the polyketide synthase AacuL. The atrochrysone carboxyl ACP thioesterase AacuM then breaks the thioester bond and releases the atrochrysone carboxylic acid from AacuL. Atrochrysone carboxylic acid is decarboxylated by the decarboxylase AacuI, and oxidized by the anthrone oxygenase AacuG to yield emodin. Emodin is then reduced to emodin hydroquinone by a yet unidentified oxidoreductase. A-ring reduction by the short chain dehydrogenase AacuN, dehydration by the scytalone dehydratase-like protein AacuK and probable spontaneous re-oxidation, results in overall deoxygenation to chrysophanol. Baeyer-Villiger oxidation by the Baeyer-Villiger monooxygenase (BVMO) AacuH then yields monodictyphenone. Monodictyphenone is transformed into compounds with the tetrahydroxanthone skeleton via methylesterification by the methyltransferase AacuQ, followed by the action of the flavin-dependent monooxygenase AacuC, the isomerase AacuP, and the short chain dehydrogenase/reductase AacuF or AacuD. AacuF and AacuD should accept the same compound as a substrate but perform the ketoreduction with a different stereoselectivity, thus yielding blennolides B and A, respectively. In the final step of the biosynthesis, the cytochrome P450 monooxygenase AacuE accepts blennolide B and/or blennolide A to conduct the dimerization reaction to furnish the tetrahydroxanthone dimers, secalonic acids D, B, and F. The polypeptide is Monooxygenase AacuO (Aspergillus aculeatus (strain ATCC 16872 / CBS 172.66 / WB 5094)).